The sequence spans 176 residues: Glycine-rich RNA-binding protein 7 (176 aa).

An N-acetylalanine modification is found at A2. The tract at residues 2-41 (ASGDVEYRCFVGGLAWATDDRALETAFAQYGDVIDSKIIN) is required for RNA chaperone activity. The region spanning 8–86 (YRCFVGGLAW…RSITVNEAQS (79 aa)) is the RRM domain. The residue at position 49 (R49) is an ADP-ribosylarginine; by HopU1. Residues 83 to 103 (EAQSRGSGGGGGHRGGGGGGY) form a disordered region. Over residues 88 to 103 (GSGGGGGHRGGGGGGY) the composition is skewed to gly residues. The glycine-rich (GR) required for cell-to-cell movement stretch occupies residues 88 to 175 (GSGGGGGHRG…GYGGSGGGGG (88 aa)). Positions 97–148 (GGGGGGYRSGGGGGYSGGGGSYGGGGGRREGGGGYSGGGGGYSSRGGGGGSY) are nuclear targeting sequence (M9). 2 positions are modified to phosphoserine: S105 and S117. Residues 131 to 176 (YSGGGGGYSSRGGGGGSYGGGRREGGGGYGGGEGGGYGGSGGGGGW) are disordered.

The protein belongs to the GR-RBP family. In terms of assembly, interacts with TRN1. Interacts with the Pseudomonas syringae type III effector HopU1. Binds to small phloem-mobile single-stranded RNAs (ss-sRNA, e.g. small interfering RNA (siRNA) and microRNA (miRNA)) in the phloeme exudate, including viral-derived sRNA (vsiRNA). Post-translationally, ADP-ribosylated by the Pseudomonas syringae type III effector HopU1. ADP-ribosylation reduces the ability of the protein to bind RNA. In terms of tissue distribution, ubiquitous with strong expression in guard cell.

The protein resides in the cytoplasm. The protein localises to the nucleus. It is found in the secreted. Plays a role in RNA transcription or processing during stress. Binds RNAs and DNAs sequence with a preference to single-stranded nucleic acids. Displays strong affinity to poly(U) and poly(G) sequence. Involved in mRNA alternative splicing of numerous targets by modulating splice site selection. Negatively regulates the circadian oscillations of its own transcript as well as RBG8 transcript. Forms an interlocked post-transcriptional negative feedback loop with the RBG8 autoregulatory circuit. Both proteins negatively autoregulate and reciprocally crossregulate by binding to their pre-mRNAs and promoting unproductive splicing coupled to degradation via the NMD pathway. Involved in the regulation of abscisic acid and stress responses. Affects the growth and stress tolerance under high salt and dehydration stress conditions, and also confers freezing tolerance, particularly via the regulation of stomatal opening and closing in the guard cells. Exhibits RNA chaperone activity during the cold adaptation process. Involved in the export of mRNAs from the nucleus to the cytoplasm under cold stress conditions. Target of the Pseudomonas syringae type III effector HopU1, which could probably be involved in plant innate immunity. Component of the flowering autonomous pathway which promotes floral transition, at least partly by down-regulating FLC. Mediates cell-to-cell trafficking of RNA interference (RNAi) signals (small RNAs (sRNA), e.g. small interfering RNA (siRNA) and microRNA (miRNA)) which regulate growth and development, as well as responses to environmental inputs, including pathogen attack; can compromise zucchini yellow mosaic virus (ZYMV) and tobacco rattle virus (TRV) infections at the early stage. The chain is Glycine-rich RNA-binding protein 7 from Arabidopsis thaliana (Mouse-ear cress).